A 268-amino-acid polypeptide reads, in one-letter code: Ribosomal RNA small subunit methyltransferase A (268 aa).

The S-adenosyl-L-methionine site is built by Asn23, Ile25, Gly50, Glu72, Asp97, and Asn116.

The protein belongs to the class I-like SAM-binding methyltransferase superfamily. rRNA adenine N(6)-methyltransferase family. RsmA subfamily.

Its subcellular location is the cytoplasm. It carries out the reaction adenosine(1518)/adenosine(1519) in 16S rRNA + 4 S-adenosyl-L-methionine = N(6)-dimethyladenosine(1518)/N(6)-dimethyladenosine(1519) in 16S rRNA + 4 S-adenosyl-L-homocysteine + 4 H(+). Its function is as follows. Specifically dimethylates two adjacent adenosines (A1518 and A1519) in the loop of a conserved hairpin near the 3'-end of 16S rRNA in the 30S particle. May play a critical role in biogenesis of 30S subunits. This is Ribosomal RNA small subunit methyltransferase A from Rickettsia bellii (strain OSU 85-389).